We begin with the raw amino-acid sequence, 102 residues long: Amoebiasin-1 (102 aa).

Residues 27–32 (NPTTGY) carry the BC loop motif. A DE loop motif is present at residues 51-61 (DQHAPGICGCG). Residues 85-93 (PWAPNANDR) carry the FG loop motif.

Belongs to the protease inhibitor I42 family. As to quaternary structure, monomer. During oxidative conditions, forms homooligomers; disulfide-linked. Interacts with cysteine protease CP2. Interacts with cysteine protease CP5. In terms of processing, during oxidative conditions, cys-39, cys-58 and cys-60 react to form intra- and inter-molecular disulfide bonds resulting in the loss of the protein inhibitory activity.

The protein localises to the cytoplasm. Cysteine protease inhibitor. Inhibits cysteine proteases CP1, CP2 and CP5. May protect the cytosol against cysteine proteases released by damaged intracellular vesicles. The protein is Amoebiasin-1 of Entamoeba histolytica (strain ATCC 30459 / HM-1:IMSS / ABRM).